The sequence spans 276 residues: F420-dependent methylenetetrahydromethanopterin dehydrogenase (276 aa).

Residues 257-276 (TPHGKEGETLSKTDLLAKPE) are disordered. Residues 259–276 (HGKEGETLSKTDLLAKPE) are compositionally biased toward basic and acidic residues.

The protein belongs to the MTD family.

The catalysed reaction is 5,10-methylenetetrahydromethanopterin + oxidized coenzyme F420-(gamma-L-Glu)(n) + 2 H(+) = 5,10-methenyl-5,6,7,8-tetrahydromethanopterin + reduced coenzyme F420-(gamma-L-Glu)(n). Its pathway is one-carbon metabolism; methanogenesis from CO(2); 5,10-methylene-5,6,7,8-tetrahydromethanopterin from 5,10-methenyl-5,6,7,8-tetrahydromethanopterin (coenzyme F420 route): step 1/1. In terms of biological role, catalyzes the reversible reduction of methenyl-H(4)MPT(+) to methylene-H(4)MPT. This chain is F420-dependent methylenetetrahydromethanopterin dehydrogenase (mtd), found in Methanothermobacter thermautotrophicus (strain ATCC 29096 / DSM 1053 / JCM 10044 / NBRC 100330 / Delta H) (Methanobacterium thermoautotrophicum).